Here is an 878-residue protein sequence, read N- to C-terminus: DNA mismatch repair protein MutS (878 aa).

626-633 (GPNMAGKS) contributes to the ATP binding site.

It belongs to the DNA mismatch repair MutS family.

This protein is involved in the repair of mismatches in DNA. It is possible that it carries out the mismatch recognition step. This protein has a weak ATPase activity. The sequence is that of DNA mismatch repair protein MutS from Paracoccus denitrificans (strain Pd 1222).